Consider the following 530-residue polypeptide: GMP synthase [glutamine-hydrolyzing] (530 aa).

The Glutamine amidotransferase type-1 domain maps to 4-205 (RILILDYGSQ…VKDICGCEGD (202 aa)). The active-site Nucleophile is Cys-84. Active-site residues include His-179 and Glu-181. In terms of domain architecture, GMPS ATP-PPase spans 206–398 (WNMPDYISEA…LGLPPQMVYR (193 aa)). 233–239 (SGGVDSS) contacts ATP.

In terms of assembly, homodimer.

The enzyme catalyses XMP + L-glutamine + ATP + H2O = GMP + L-glutamate + AMP + diphosphate + 2 H(+). It functions in the pathway purine metabolism; GMP biosynthesis; GMP from XMP (L-Gln route): step 1/1. Functionally, catalyzes the synthesis of GMP from XMP. This chain is GMP synthase [glutamine-hydrolyzing], found in Bordetella bronchiseptica (strain ATCC BAA-588 / NCTC 13252 / RB50) (Alcaligenes bronchisepticus).